Consider the following 485-residue polypeptide: Pyruvate kinase (485 aa).

R33 serves as a coordination point for substrate. Positions 35, 37, 67, and 68 each coordinate K(+). Residue 35-38 (NFSH) participates in ATP binding. ATP-binding residues include R74 and K155. A Mg(2+)-binding site is contributed by E221. The substrate site is built by G244, D245, and T277. D245 serves as a coordination point for Mg(2+).

Belongs to the pyruvate kinase family. As to quaternary structure, homotetramer. The cofactor is Mg(2+). K(+) is required as a cofactor.

The catalysed reaction is pyruvate + ATP = phosphoenolpyruvate + ADP + H(+). It participates in carbohydrate degradation; glycolysis; pyruvate from D-glyceraldehyde 3-phosphate: step 5/5. The chain is Pyruvate kinase (pyk) from Chlamydia trachomatis serovar D (strain ATCC VR-885 / DSM 19411 / UW-3/Cx).